The following is a 272-amino-acid chain: AA9 family lytic polysaccharide monooxygenase G (272 aa).

The first 22 residues, 1–22, serve as a signal peptide directing secretion; it reads MKGAGSASFLLTLLSTITRTSA. His23 contributes to the Cu(2+) binding site. Asn60 carries an N-linked (GlcNAc...) asparagine glycan. 2 cysteine pairs are disulfide-bonded: Cys78–Cys202 and Cys121–Cys125. Position 110 (His110) interacts with Cu(2+). Residues His188 and Gln197 each contribute to the O2 site. Cu(2+) is bound at residue Tyr199.

This sequence belongs to the polysaccharide monooxygenase AA9 family. Requires Cu(2+) as cofactor.

The protein resides in the secreted. It catalyses the reaction [(1-&gt;4)-beta-D-glucosyl]n+m + reduced acceptor + O2 = 4-dehydro-beta-D-glucosyl-[(1-&gt;4)-beta-D-glucosyl]n-1 + [(1-&gt;4)-beta-D-glucosyl]m + acceptor + H2O.. Functionally, lytic polysaccharide monooxygenase (LPMO) that depolymerizes crystalline and amorphous polysaccharides via the oxidation of scissile alpha- or beta-(1-4)-glycosidic bonds, yielding C1 or C4 oxidation products. Catalysis by LPMOs requires the reduction of the active-site copper from Cu(II) to Cu(I) by a reducing agent and H(2)O(2) or O(2) as a cosubstrate. Acts preferentially on crystalline regions of cellulose such as highly crystalline algae cellulose. The sequence is that of AA9 family lytic polysaccharide monooxygenase G from Emericella nidulans (strain FGSC A4 / ATCC 38163 / CBS 112.46 / NRRL 194 / M139) (Aspergillus nidulans).